The primary structure comprises 149 residues: SsrA-binding protein (149 aa).

Belongs to the SmpB family.

Its subcellular location is the cytoplasm. Its function is as follows. Required for rescue of stalled ribosomes mediated by trans-translation. Binds to transfer-messenger RNA (tmRNA), required for stable association of tmRNA with ribosomes. tmRNA and SmpB together mimic tRNA shape, replacing the anticodon stem-loop with SmpB. tmRNA is encoded by the ssrA gene; the 2 termini fold to resemble tRNA(Ala) and it encodes a 'tag peptide', a short internal open reading frame. During trans-translation Ala-aminoacylated tmRNA acts like a tRNA, entering the A-site of stalled ribosomes, displacing the stalled mRNA. The ribosome then switches to translate the ORF on the tmRNA; the nascent peptide is terminated with the 'tag peptide' encoded by the tmRNA and targeted for degradation. The ribosome is freed to recommence translation, which seems to be the essential function of trans-translation. This chain is SsrA-binding protein, found in Anaplasma marginale (strain St. Maries).